A 62-amino-acid chain; its full sequence is Sperm protamine P1 (62 aa).

The tract at residues 1 to 62 is disordered; that stretch reads MARYRRHSRS…RRYSRRGRRR (62 aa).

This sequence belongs to the protamine P1 family. In terms of tissue distribution, testis.

The protein localises to the nucleus. It localises to the chromosome. Its function is as follows. Protamines substitute for histones in the chromatin of sperm during the haploid phase of spermatogenesis. They compact sperm DNA into a highly condensed, stable and inactive complex. The chain is Sperm protamine P1 (PRM1) from Pseudantechinus bilarni (Sandstone dibbler).